We begin with the raw amino-acid sequence, 199 residues long: Protein p2 (199 aa).

The protein resides in the host cytoplasm. The sequence is that of Protein p2 from Avena sativa (Oat).